The chain runs to 628 residues: Biosynthetic arginine decarboxylase (628 aa).

An N6-(pyridoxal phosphate)lysine modification is found at K99. Residue 279–289 (VDVGGGLGIDY) participates in substrate binding.

The protein belongs to the Orn/Lys/Arg decarboxylase class-II family. SpeA subfamily. Mg(2+) serves as cofactor. Requires pyridoxal 5'-phosphate as cofactor.

The enzyme catalyses L-arginine + H(+) = agmatine + CO2. It functions in the pathway amine and polyamine biosynthesis; agmatine biosynthesis; agmatine from L-arginine: step 1/1. Its function is as follows. Catalyzes the biosynthesis of agmatine from arginine. This is Biosynthetic arginine decarboxylase from Xylella fastidiosa (strain M12).